Consider the following 234-residue polypeptide: Dienlactone hydrolase 2 (234 aa).

Catalysis depends on residues Cys-143, Asp-167, and His-199.

It belongs to the dienelactone hydrolase family.

Its pathway is xenobiotic degradation. Its function is as follows. Dienlactone hydrolase; part of the Fusarium detoxification of benzoxazolinone cluster 2 (FDB2) involved in the degradation of benzoxazolinones produced by the host plant. Maize, wheat, and rye produce the 2 benzoxazinone phytoanticipins 2,4-dihy-droxy-7-methoxy-1,4-benzoxazin-3-one (DIMBOA) and 2,4-dihydroxy-1,4-benzoxazin-3-one (DIBOA) that, due to their inherent instability once released, spontaneously degrade to the more stable corresponding benzoxazolinones, 6-methoxy-2-benzoxazolinone (MBOA) and 2-benzoxazolinone (BOA), respectively. The first step in the detoxification of benzoxazolinones involves the hydrolysis of the cyclic ester bond of benzoxazolinones by the FDB1 cluster gamma-lactamase MBL1 to aminophenols. MBL1 is able to convert BOA into 2-aminophenol (2-AP), as well as MBOA into 5-methoxy-2-aminophenol (2-AMP). The FDB2 cluster N-malonyltransferase FDB2/NAT1 then metabolizes aminophenols via N-malonylation to non-toxic malonamic acids. FDB2/NAT1 converts 2-AP into N-(2-hydroxyphenyl) malonamic acid (HPMA) and 2-AMP into N-(2-hydroxy-4-methoxyphenyl) malonamic acid (HMPMA). The duplicated dienlactone hydrolases DLH1 and DLH2 may provide redundant function for hydrolyzing the lactone moiety in the BOA molecule. The roles of the amidases and other enzymes encoded by the 2 FDB clusters have not been identified so far. The polypeptide is Dienlactone hydrolase 2 (Gibberella moniliformis (strain M3125 / FGSC 7600) (Maize ear and stalk rot fungus)).